The following is a 342-amino-acid chain: Methionine import ATP-binding protein MetN 2 (342 aa).

The ABC transporter domain occupies 2–241 (ISIEGLSKVF…PKQLVTRKFV (240 aa)). Residue 38 to 45 (GYSGAGKS) coordinates ATP.

It belongs to the ABC transporter superfamily. Methionine importer (TC 3.A.1.24) family. The complex is composed of two ATP-binding proteins (MetN), two transmembrane proteins (MetI) and a solute-binding protein (MetQ).

It localises to the cell membrane. It carries out the reaction L-methionine(out) + ATP + H2O = L-methionine(in) + ADP + phosphate + H(+). It catalyses the reaction D-methionine(out) + ATP + H2O = D-methionine(in) + ADP + phosphate + H(+). Its function is as follows. Part of the ABC transporter complex MetNIQ involved in methionine import. Responsible for energy coupling to the transport system. The sequence is that of Methionine import ATP-binding protein MetN 2 from Oceanobacillus iheyensis (strain DSM 14371 / CIP 107618 / JCM 11309 / KCTC 3954 / HTE831).